Consider the following 213-residue polypeptide: Bacteriochlorophyll synthase 23 kDa chain (213 aa).

It functions in the pathway porphyrin-containing compound metabolism; bacteriochlorophyll biosynthesis (light-independent). The chain is Bacteriochlorophyll synthase 23 kDa chain (bchJ) from Rhodobacter capsulatus (strain ATCC BAA-309 / NBRC 16581 / SB1003).